A 162-amino-acid chain; its full sequence is E3 ubiquitin-protein ligase LAP (162 aa).

Over 1 to 78 (MEGSDNTNTH…RWKCSFMYCN (78 aa)) the chain is Cytoplasmic. The RING-CH-type zinc-finger motif lies at 3 to 61 (GSDNTNTHCWICKDEYNVSTNFCNCKNEFKIVHKNCLEEWINFSHNTKCKICNGKYNIK). Zn(2+) is bound by residues Cys11, Cys14, Cys25, Cys27, His35, Cys38, Cys51, and Cys54. The helical transmembrane segment at 79-99 (VPAICVSLICLLLLPLTILLV) threads the bilayer. Residues 100–121 (KFNLKSMLENIENRDLIALISA) lie on the Lumenal side of the membrane. A helical membrane pass occupies residues 122–142 (MAYSLPCVVGFITVVHILIAL). At 143–162 (YDYYLAAKSDNTTYQVYEYI) the chain is on the cytoplasmic side.

This sequence belongs to the poxviridae LAP protein family.

It is found in the host membrane. The protein resides in the host Golgi apparatus. The protein localises to the host trans-Golgi network membrane. It localises to the host early endosome membrane. The catalysed reaction is S-ubiquitinyl-[E2 ubiquitin-conjugating enzyme]-L-cysteine + [acceptor protein]-L-lysine = [E2 ubiquitin-conjugating enzyme]-L-cysteine + N(6)-ubiquitinyl-[acceptor protein]-L-lysine.. E3 ubiquitin-protein ligase which promotes ubiquitination and subsequent degradation of host MHC-I and CD4 molecules, presumably to prevent lysis of infected cells by cytotoxic T-lymphocytes and NK cell. Binds target molecules through transmembrane interaction. The result of this ubiquitination is the enhancement of the endocytosis of the target chain and the delivery to the lysosome, where it is proteolytically destroyed. The polypeptide is E3 ubiquitin-protein ligase LAP (LW010) (Lumpy skin disease virus (LSDV)).